The chain runs to 701 residues: Potassium-transporting ATPase ATP-binding subunit 1 (701 aa).

The tract at residues 1-26 is disordered; sequence MNPVAPTRKVKPPRNRPSDRRQARKK. 4 helical membrane passes run 57-77, 90-110, 241-261, and 278-298; these read MFVV…PDLF, GLLT…EAVA, VALT…IATL, and IALL…AIGI. The active-site 4-aspartylphosphate intermediate is aspartate 329. ATP-binding positions include aspartate 366, glutamate 370, 397–404, and lysine 416; that span reads FSAKTRMS. Residues aspartate 539 and aspartate 543 each contribute to the Mg(2+) site. The next 3 membrane-spanning stretches (helical) occupy residues 599–619, 635–655, and 681–701; these read FSIA…FAAA, AVLS…PLAL, and VIAP…VGLA.

It belongs to the cation transport ATPase (P-type) (TC 3.A.3) family. Type IA subfamily. In terms of assembly, the system is composed of three essential subunits: KdpA, KdpB and KdpC.

Its subcellular location is the cell inner membrane. It carries out the reaction K(+)(out) + ATP + H2O = K(+)(in) + ADP + phosphate + H(+). In terms of biological role, part of the high-affinity ATP-driven potassium transport (or Kdp) system, which catalyzes the hydrolysis of ATP coupled with the electrogenic transport of potassium into the cytoplasm. This subunit is responsible for energy coupling to the transport system and for the release of the potassium ions to the cytoplasm. This is Potassium-transporting ATPase ATP-binding subunit 1 from Nostoc sp. (strain PCC 7120 / SAG 25.82 / UTEX 2576).